We begin with the raw amino-acid sequence, 274 residues long: ATP synthase subunit a (274 aa).

5 helical membrane-spanning segments follow: residues 43–63, 103–123, 149–169, 223–243, and 245–265; these read TLNIDSLFFSVVLGLAFLFVF, VIAPLALTVFVWVLLMNMMDL, DVSITLSMALGVFILILFYSI, LIFILIAGLLPWWSQWMLSLP, and AIFHILIITLQAFIFMVLTIV.

Belongs to the ATPase A chain family. In terms of assembly, F-type ATPases have 2 components, CF(1) - the catalytic core - and CF(0) - the membrane proton channel. CF(1) has five subunits: alpha(3), beta(3), gamma(1), delta(1), epsilon(1). CF(0) has three main subunits: a(1), b(2) and c(9-12). The alpha and beta chains form an alternating ring which encloses part of the gamma chain. CF(1) is attached to CF(0) by a central stalk formed by the gamma and epsilon chains, while a peripheral stalk is formed by the delta and b chains.

The protein localises to the cell inner membrane. Functionally, key component of the proton channel; it plays a direct role in the translocation of protons across the membrane. The polypeptide is ATP synthase subunit a (Yersinia enterocolitica serotype O:8 / biotype 1B (strain NCTC 13174 / 8081)).